We begin with the raw amino-acid sequence, 922 residues long: Neuropilin-1 (922 aa).

An N-terminal signal peptide occupies residues 1–21 (MERGLPLLCATLALALALAGA). The Extracellular segment spans residues 22 to 855 (FRSDKCGGTI…PGNVLKTLDP (834 aa)). 3 disulfide bridges follow: Cys-27–Cys-54, Cys-82–Cys-104, and Cys-147–Cys-173. CUB domains follow at residues 27-141 (CGGT…YEIF) and 147-265 (CSQN…YSVL). A glycan (N-linked (GlcNAc...) asparagine) is linked at Asn-150. Positions 195, 209, and 250 each coordinate Ca(2+). Residues Cys-206 and Cys-228 are joined by a disulfide bond. N-linked (GlcNAc...) asparagine glycans are attached at residues Asn-261, Asn-300, and Asn-522. Intrachain disulfides connect Cys-275–Cys-424 and Cys-431–Cys-583. F5/8 type C domains are found at residues 275-424 (CMEA…VYGC) and 431-583 (CSGM…LLGC). The O-linked (Xyl...) (chondroitin sulfate) serine; alternate glycan is linked to Ser-612. Ser-612 carries O-linked (Xyl...) (heparan sulfate) serine; alternate glycosylation. The MAM domain maps to 645 to 811 (TYGFNCEFGW…NHIPQEDCAK (167 aa)). O-linked (Xyl...) (chondroitin sulfate) serine glycosylation occurs at Ser-829. Residue Asn-841 is glycosylated (N-linked (GlcNAc...) asparagine). A helical membrane pass occupies residues 856–880 (ILITIIAMSALGVLLGAVCGVVLYC). The Cytoplasmic portion of the chain corresponds to 881–922 (ACWHNGMSERNLSALENYNFELVDGVKLKKDKLNPQSNYSEA). Position 893 is a phosphoserine (Ser-893).

Belongs to the neuropilin family. As to quaternary structure, homodimer, and heterodimer with NRP2. Binds PLXNB1. Interacts with FER. Interacts with VEGFA. Interacts with ABCB8/MITOSUR in mitochondria. As to expression, found in the embryonic nervous system. Expressed in dorsal root ganglia.

The protein resides in the mitochondrion membrane. It is found in the cell membrane. Its subcellular location is the cytoplasm. Its function is as follows. Cell-surface receptor involved in the development of the cardiovascular system, in angiogenesis, in the formation of certain neuronal circuits and in organogenesis outside the nervous system. Mediates the chemorepulsant activity of semaphorins. Recognizes a C-end rule (CendR) motif R/KXXR/K on its ligands which causes cellular internalization and vascular leakage. It binds to semaphorin 3A, the PLGF-2 isoform of PGF, the VEGF165 isoform of VEGFA and VEGFB. Coexpression with KDR results in increased VEGF165 binding to KDR as well as increased chemotaxis. Regulates VEGF-induced angiogenesis. Binding to VEGFA initiates a signaling pathway needed for motor neuron axon guidance and cell body migration, including for the caudal migration of facial motor neurons from rhombomere 4 to rhombomere 6 during embryonic development. Regulates mitochondrial iron transport via interaction with ABCB8/MITOSUR. This is Neuropilin-1 (Nrp1) from Rattus norvegicus (Rat).